The sequence spans 1685 residues: PHD and RING finger domain-containing protein 1 (1685 aa).

The disordered stretch occupies residues 1–82 (MDDDNLDELV…GSEDSEDGIE (82 aa)). The span at 41–81 (DSEDDTGSEQDDDTDGEETEGLSEEEDPEDRSGSEDSEDGI) shows a compositional bias: acidic residues. The segment at 109–150 (CPICLNAFRDQAVGTPETCAHYFCLDCIIEWSRNANSCPVDR) adopts an RING-type; degenerate zinc-finger fold. The PHD-type zinc finger occupies 188–238 (PTFCEVCGRSDREDRLLLCDGCDAGYHMECLDPPLQEVPVDEWFCPECAVP). 5 disordered regions span residues 333-390 (PLTP…KLKN), 449-483 (DSNG…VARP), 537-590 (SAKR…GLSC), 606-777 (TPVR…GSSF), and 809-860 (KVQR…LLPS). Thr335 bears the Phosphothreonine mark. Basic residues-rich tracts occupy residues 339–364 (PAKR…RSSV) and 372–387 (RAKK…KGRK). Phosphoserine occurs at positions 450 and 460. Polar residues-rich tracts occupy residues 606-625 (TPVR…GNLS) and 637-662 (SPRL…NFPS). Positions 671 to 682 (QKTDPRRPDFSK) are enriched in basic and acidic residues. Polar residues-rich tracts occupy residues 694–709 (SNST…QTVE) and 737–751 (SSRG…TSGS). 9 positions are modified to phosphoserine: Ser817, Ser848, Ser849, Ser867, Ser870, Ser922, Ser948, Ser984, and Ser1002. Residues 835–860 (PFDPTGSDSSPPSSSPESLGSGLLPS) are compositionally biased toward low complexity. Disordered stretches follow at residues 892 to 1229 (GTEM…VSEV), 1290 to 1355 (QLDD…APSD), and 1369 to 1390 (TTLS…SGRG). Acidic residues predominate over residues 922-934 (SDLEQEGLGEIEP). Low complexity predominate over residues 1001-1010 (SSRSRSTSSS). 2 stretches are compositionally biased toward basic residues: residues 1011-1031 (RSRK…RTRS) and 1054-1064 (KRHRAKTKSRR). Positions 1065–1075 (SSSDRASSQDR) are enriched in basic and acidic residues. Basic residues-rich tracts occupy residues 1089–1102 (GPWG…KSRS) and 1117–1129 (SRRR…GSRS). 2 stretches are compositionally biased toward basic and acidic residues: residues 1130–1143 (RGRD…LERD) and 1151–1165 (RSRE…MTRS). Phosphoserine occurs at positions 1135 and 1139. Basic residues predominate over residues 1181-1191 (RTRRPHSREKH). Positions 1192–1201 (PHSPEKKGAV) are enriched in basic and acidic residues. Ser1205 is modified (phosphoserine). Positions 1292–1305 (DDMSSPPSPESTDS) are enriched in low complexity. Residues Ser1372 and Ser1383 each carry the phosphoserine modification. Thr1416 carries the post-translational modification Phosphothreonine. Disordered stretches follow at residues 1421–1448 (EAEA…EGDW), 1466–1501 (LPPP…VGTL), and 1569–1591 (LAVP…AEKT). The span at 1577–1591 (SEERTATPKTAAEKT) shows a compositional bias: basic and acidic residues. The stretch at 1589–1615 (EKTKKEEYMKKLHMQERAVEEVKLAIK) forms a coiled coil.

Interacts with POLR2A (via the C-terminal domain).

This Rattus norvegicus (Rat) protein is PHD and RING finger domain-containing protein 1.